Here is a 197-residue protein sequence, read N- to C-terminus: Putative AgrB-like protein (197 aa).

4 helical membrane passes run 29-49 (FGFT…AVGL), 79-99 (SIGC…VPFA), 102-122 (YAWI…APYY), and 143-163 (ILIV…LVLG).

Belongs to the AgrB family.

It localises to the cell membrane. Functionally, may be involved in the proteolytic processing of a quorum sensing system signal molecule precursor. This chain is Putative AgrB-like protein, found in Halalkalibacterium halodurans (strain ATCC BAA-125 / DSM 18197 / FERM 7344 / JCM 9153 / C-125) (Bacillus halodurans).